A 252-amino-acid chain; its full sequence is Biosynthetic peptidoglycan transglycosylase (252 aa).

A helical transmembrane segment spans residues 23–43 (IGFLLGCIVAGVVAMQVYFFL).

This sequence belongs to the glycosyltransferase 51 family.

It localises to the cell inner membrane. It carries out the reaction [GlcNAc-(1-&gt;4)-Mur2Ac(oyl-L-Ala-gamma-D-Glu-L-Lys-D-Ala-D-Ala)](n)-di-trans,octa-cis-undecaprenyl diphosphate + beta-D-GlcNAc-(1-&gt;4)-Mur2Ac(oyl-L-Ala-gamma-D-Glu-L-Lys-D-Ala-D-Ala)-di-trans,octa-cis-undecaprenyl diphosphate = [GlcNAc-(1-&gt;4)-Mur2Ac(oyl-L-Ala-gamma-D-Glu-L-Lys-D-Ala-D-Ala)](n+1)-di-trans,octa-cis-undecaprenyl diphosphate + di-trans,octa-cis-undecaprenyl diphosphate + H(+). The protein operates within cell wall biogenesis; peptidoglycan biosynthesis. Peptidoglycan polymerase that catalyzes glycan chain elongation from lipid-linked precursors. This is Biosynthetic peptidoglycan transglycosylase from Cupriavidus pinatubonensis (strain JMP 134 / LMG 1197) (Cupriavidus necator (strain JMP 134)).